Reading from the N-terminus, the 286-residue chain is Bifunctional protein FolD (286 aa).

NADP(+) is bound by residues 164-166 (GTS) and isoleucine 230.

It belongs to the tetrahydrofolate dehydrogenase/cyclohydrolase family. In terms of assembly, homodimer.

It carries out the reaction (6R)-5,10-methylene-5,6,7,8-tetrahydrofolate + NADP(+) = (6R)-5,10-methenyltetrahydrofolate + NADPH. It catalyses the reaction (6R)-5,10-methenyltetrahydrofolate + H2O = (6R)-10-formyltetrahydrofolate + H(+). It functions in the pathway one-carbon metabolism; tetrahydrofolate interconversion. Catalyzes the oxidation of 5,10-methylenetetrahydrofolate to 5,10-methenyltetrahydrofolate and then the hydrolysis of 5,10-methenyltetrahydrofolate to 10-formyltetrahydrofolate. The protein is Bifunctional protein FolD of Mesoplasma florum (strain ATCC 33453 / NBRC 100688 / NCTC 11704 / L1) (Acholeplasma florum).